Reading from the N-terminus, the 744-residue chain is 3-isopropylmalate dehydratase (744 aa).

3 residues coordinate [4Fe-4S] cluster: Cys341, Cys401, and Cys404.

It belongs to the aconitase/IPM isomerase family. In terms of assembly, monomer. It depends on [4Fe-4S] cluster as a cofactor.

It carries out the reaction (2R,3S)-3-isopropylmalate = (2S)-2-isopropylmalate. It functions in the pathway amino-acid biosynthesis; L-leucine biosynthesis; L-leucine from 3-methyl-2-oxobutanoate: step 2/4. Catalyzes the isomerization between 2-isopropylmalate and 3-isopropylmalate, via the formation of 2-isopropylmaleate. This Phycomyces blakesleeanus (strain ATCC 8743b / DSM 1359 / FGSC 10004 / NBRC 33097 / NRRL 1555) protein is 3-isopropylmalate dehydratase (leu1).